The chain runs to 394 residues: MTTLLKTLKQDWSLSATIAGFLAVLISYSGPLIIFFQAAQKAHVSTEMMISWIWAISIGAAVTGIFLSIRFKTPVVTAWSAPGTALLVTLFPNISLNEAVAAYITAAIVIFLVGITGYFDKLLKWIPQGIAAGMMAGILFQFGLGLFLATDTLPLIVFSMLLCYLISRRFSPRYCMLWVLICGVAFSFFLGKMNPVPLDFQIARPQFIAPEWSWFSTLNLALPLILVSLTGQFLPGMAILKLSGYNTPAKPIIAAASLASLFAAFAGGITIVLASITATLCMGKDAHELKDKRYIAGIANGLFYVLGGVFAGSIVALFSLLPKELVAALAGLALLGAIASNIKIAMQEDQQRDPALITFLATVSGMHFLGLSSVFWGMCIGMLAYFILLKPKAS.

The next 11 helical transmembrane spans lie at 16-36, 49-69, 74-94, 99-119, 139-161, 176-196, 220-240, 252-272, 301-321, 325-345, and 368-388; these read ATIA…IIFF, MISW…FLSI, PVVT…FPNI, AVAA…TGYF, LFQF…FSML, MLWV…MNPV, LALP…MAIL, IIAA…ITIV, GLFY…FSLL, LVAA…IKIA, and FLGL…YFIL.

It localises to the cell membrane. Functionally, probably involved in the transport of benzoate. In Acinetobacter baylyi (strain ATCC 33305 / BD413 / ADP1), this protein is Benzoate membrane transport protein (benE).